Consider the following 89-residue polypeptide: Small ribosomal subunit protein uS15 (89 aa).

Belongs to the universal ribosomal protein uS15 family. As to quaternary structure, part of the 30S ribosomal subunit. Forms a bridge to the 50S subunit in the 70S ribosome, contacting the 23S rRNA.

One of the primary rRNA binding proteins, it binds directly to 16S rRNA where it helps nucleate assembly of the platform of the 30S subunit by binding and bridging several RNA helices of the 16S rRNA. Functionally, forms an intersubunit bridge (bridge B4) with the 23S rRNA of the 50S subunit in the ribosome. The chain is Small ribosomal subunit protein uS15 from Chloroflexus aurantiacus (strain ATCC 29366 / DSM 635 / J-10-fl).